Consider the following 316-residue polypeptide: Protoheme IX farnesyltransferase (316 aa).

9 consecutive transmembrane segments (helical) span residues 28–48, 57–77, 106–126, 129–149, 156–176, 179–199, 230–250, 254–274, and 296–316; these read WLAL…AAGM, IPIG…AGAI, AALV…WLAT, LAAD…TMWL, NIVI…AATM, MAVL…PHFW, ILIY…VHEV, YTVV…RVLM, and YSLV…VLIG.

It belongs to the UbiA prenyltransferase family. Protoheme IX farnesyltransferase subfamily.

Its subcellular location is the cell inner membrane. The enzyme catalyses heme b + (2E,6E)-farnesyl diphosphate + H2O = Fe(II)-heme o + diphosphate. It participates in porphyrin-containing compound metabolism; heme O biosynthesis; heme O from protoheme: step 1/1. Converts heme B (protoheme IX) to heme O by substitution of the vinyl group on carbon 2 of heme B porphyrin ring with a hydroxyethyl farnesyl side group. This is Protoheme IX farnesyltransferase from Gluconobacter oxydans (strain 621H) (Gluconobacter suboxydans).